Here is a 544-residue protein sequence, read N- to C-terminus: Probable protein kinase UbiB (544 aa).

The Protein kinase domain occupies Asp-123 to Leu-504. Residues Leu-129 to Val-137 and Lys-155 contribute to the ATP site. Asp-290 (proton acceptor) is an active-site residue. Transmembrane regions (helical) follow at residues Met-501–Leu-521 and Leu-523–Leu-543.

It belongs to the ABC1 family. UbiB subfamily.

The protein resides in the cell inner membrane. It participates in cofactor biosynthesis; ubiquinone biosynthesis [regulation]. Functionally, is probably a protein kinase regulator of UbiI activity which is involved in aerobic coenzyme Q (ubiquinone) biosynthesis. This chain is Probable protein kinase UbiB, found in Histophilus somni (strain 129Pt) (Haemophilus somnus).